Here is a 410-residue protein sequence, read N- to C-terminus: Heat stress transcription factor A-9 (410 aa).

Residues Met-1–Lys-44 form a disordered region. Over residues Val-20–Gly-33 the composition is skewed to gly residues. Positions Gly-171–Arg-246 form a coiled coil. A hydrophobic repeat HR-A/B region spans residues Leu-179 to Val-229. The short motif at Ser-256–Arg-260 is the Nuclear localization signal element. The Nuclear export signal signature appears at Ala-279–Glu-290.

This sequence belongs to the HSF family. Class A subfamily. Homotrimer. Post-translationally, exhibits temperature-dependent phosphorylation.

Its subcellular location is the cytoplasm. The protein localises to the nucleus. Transcriptional regulator that specifically binds DNA of heat shock promoter elements (HSE). The chain is Heat stress transcription factor A-9 (HSFA9) from Oryza sativa subsp. japonica (Rice).